Consider the following 176-residue polypeptide: NAD(P)H-quinone oxidoreductase subunit 6, chloroplastic (176 aa).

5 helical membrane-spanning segments follow: residues 10–30 (FLLVFLGLGLIVGGLGVVLLT), 33–53 (IYSAFSLGLVLVCISLFHIPA), 61–81 (AQLLIYVGAINVLIVFAVMFM), 92–112 (LWTVGDGVTSLVCTSIFVSLI), and 152–172 (FFLPFELISIILLVALIGAIA).

This sequence belongs to the complex I subunit 6 family. In terms of assembly, NDH is composed of at least 16 different subunits, 5 of which are encoded in the nucleus.

It localises to the plastid. The protein resides in the chloroplast thylakoid membrane. The enzyme catalyses a plastoquinone + NADH + (n+1) H(+)(in) = a plastoquinol + NAD(+) + n H(+)(out). The catalysed reaction is a plastoquinone + NADPH + (n+1) H(+)(in) = a plastoquinol + NADP(+) + n H(+)(out). Functionally, NDH shuttles electrons from NAD(P)H:plastoquinone, via FMN and iron-sulfur (Fe-S) centers, to quinones in the photosynthetic chain and possibly in a chloroplast respiratory chain. The immediate electron acceptor for the enzyme in this species is believed to be plastoquinone. Couples the redox reaction to proton translocation, and thus conserves the redox energy in a proton gradient. The protein is NAD(P)H-quinone oxidoreductase subunit 6, chloroplastic (ndhG) of Nandina domestica (Heavenly bamboo).